We begin with the raw amino-acid sequence, 224 residues long: 7-cyano-7-deazaguanine synthase (224 aa).

Residue 10–20 participates in ATP binding; the sequence is VSGGLDSATVL. Zn(2+)-binding residues include cysteine 189, cysteine 199, cysteine 202, and cysteine 205.

The protein belongs to the QueC family. Requires Zn(2+) as cofactor.

It catalyses the reaction 7-carboxy-7-deazaguanine + NH4(+) + ATP = 7-cyano-7-deazaguanine + ADP + phosphate + H2O + H(+). Its pathway is purine metabolism; 7-cyano-7-deazaguanine biosynthesis. Catalyzes the ATP-dependent conversion of 7-carboxy-7-deazaguanine (CDG) to 7-cyano-7-deazaguanine (preQ(0)). This Nitrosococcus oceani (strain ATCC 19707 / BCRC 17464 / JCM 30415 / NCIMB 11848 / C-107) protein is 7-cyano-7-deazaguanine synthase.